A 119-amino-acid polypeptide reads, in one-letter code: uncharacterized protein (119 aa).

The chain crosses the membrane as a helical span at residues 30-50; the sequence is LMTLPCVLFLSSFGQAVIVVL.

Its subcellular location is the membrane. This is an uncharacterized protein from Saccharomyces cerevisiae (strain ATCC 204508 / S288c) (Baker's yeast).